Consider the following 148-residue polypeptide: uncharacterized protein (148 aa).

Over residues 36-45 the composition is skewed to low complexity; it reads PGAPSAGPMS. Residues 36–148 are disordered; that stretch reads PGAPSAGPMS…SGTAFFPGTT (113 aa). Residues 46–55 show a composition bias toward polar residues; it reads DSNSKGSTPR.

This is an uncharacterized protein from Bovine leukemia virus (isolate Japanese BLV-1) (BLV).